An 898-amino-acid polypeptide reads, in one-letter code: Fasciclin-2 (898 aa).

An N-terminal signal peptide occupies residues 1-22; that stretch reads MRTVACAVLLACFMGCLAGAWA. Topologically, residues 23–764 are extracellular; that stretch reads QSAGLEILPN…EDGSEGQMSS (742 aa). 5 consecutive Ig-like C2-type domains span residues 31 to 124, 134 to 219, 226 to 316, 321 to 423, and 428 to 525; these read PNSE…KQLS, PITW…RPIR, PQMS…VEVT, PRIG…GHLM, and PSFA…IMLR. N-linked (GlcNAc...) asparagine glycosylation is found at N35, N51, N149, N192, N297, and N328. C48 and C113 form a disulfide bridge. 2 disulfide bridges follow: C156/C203 and C248/C300. C343 and C407 are oxidised to a cystine. N-linked (GlcNAc...) asparagine glycans are attached at residues N447, N457, and N580. C450 and C509 are oxidised to a cystine. Fibronectin type-III domains lie at 532-626 and 644-745; these read AVLQ…TPRI and GTEN…VKDP. Residues 765 to 782 traverse the membrane as a helical segment; it reads AAIVVLVVAALLLALLVV. Residues 783-898 are Cytoplasmic-facing; sequence DLVCCLVWRG…TSFVGKDSAV (116 aa).

Its subcellular location is the membrane. Its function is as follows. Neuronal recognition molecule. Involved in a pathway recognition for axons during the development of nerve fascicles. In Schistocerca americana (American grasshopper), this protein is Fasciclin-2 (FAS2).